The following is a 389-amino-acid chain: Chaperone protein DnaJ (389 aa).

Positions 6–70 constitute a J domain; that stretch reads DYYEILGLSK…EKRAQYDRFG (65 aa). A CR-type zinc finger spans residues 131–213; the sequence is GVRKDIDIPR…CSGAGRVRSR (83 aa). Residues C144, C147, C161, C164, C187, C190, C201, and C204 each coordinate Zn(2+). CXXCXGXG motif repeat units lie at residues 144-151, 161-168, 187-194, and 201-208; these read CSTCSGTG, CPNCGGTG, CSACHGRG, and CPTCSGAG. Residues 145-167 form a disordered region; sequence STCSGTGAKPGTSPKRCPNCGGT. Residues 351 to 389 form a disordered region; it reads LSNGKKPEAEERSRSDKQKSEKPRKSKGLFEKVKDAFES. Basic and acidic residues predominate over residues 355–389; sequence KKPEAEERSRSDKQKSEKPRKSKGLFEKVKDAFES.

The protein belongs to the DnaJ family. In terms of assembly, homodimer. Zn(2+) is required as a cofactor.

The protein resides in the cytoplasm. Functionally, participates actively in the response to hyperosmotic and heat shock by preventing the aggregation of stress-denatured proteins and by disaggregating proteins, also in an autonomous, DnaK-independent fashion. Unfolded proteins bind initially to DnaJ; upon interaction with the DnaJ-bound protein, DnaK hydrolyzes its bound ATP, resulting in the formation of a stable complex. GrpE releases ADP from DnaK; ATP binding to DnaK triggers the release of the substrate protein, thus completing the reaction cycle. Several rounds of ATP-dependent interactions between DnaJ, DnaK and GrpE are required for fully efficient folding. Also involved, together with DnaK and GrpE, in the DNA replication of plasmids through activation of initiation proteins. The chain is Chaperone protein DnaJ from Methanosarcina mazei (strain ATCC BAA-159 / DSM 3647 / Goe1 / Go1 / JCM 11833 / OCM 88) (Methanosarcina frisia).